Consider the following 295-residue polypeptide: Probable isochorismatase (295 aa).

A disordered region spans residues 1–21 (MGIPKIAGYPLPTPAEFPDNR). The Carrier domain occupies 207–286 (EIRSQKPLTL…EWWLVIEQAR (80 aa)). O-(pantetheine 4'-phosphoryl)serine is present on Ser247.

It belongs to the isochorismatase family. It depends on pantetheine 4'-phosphate as a cofactor.

It carries out the reaction isochorismate + H2O = (2S,3S)-2,3-dihydroxy-2,3-dihydrobenzoate + pyruvate. Its pathway is siderophore biosynthesis; vulnibactin biosynthesis. Its function is as follows. Involved in the biosynthesis of the catechol siderophore vulnibactin. Vulnibactin is a chelating compound involved in transporting iron from the bacterial environment into the cell cytoplasm. In Vibrio vulnificus (strain CMCP6), this protein is Probable isochorismatase (venB).